We begin with the raw amino-acid sequence, 297 residues long: Coatomer subunit epsilon-2 (297 aa).

It belongs to the COPE family. As to quaternary structure, oligomeric complex that consists of at least the alpha, beta, beta', gamma, delta, epsilon and zeta subunits.

It localises to the cytoplasm. It is found in the golgi apparatus membrane. The protein resides in the cytoplasmic vesicle. Its subcellular location is the COPI-coated vesicle membrane. Functionally, the coatomer is a cytosolic protein complex that binds to dilysine motifs and reversibly associates with Golgi non-clathrin-coated vesicles, which further mediate biosynthetic protein transport from the ER, via the Golgi up to the trans Golgi network. The coatomer complex is required for budding from Golgi membranes, and is essential for the retrograde Golgi-to-ER transport of dilysine-tagged proteins. The chain is Coatomer subunit epsilon-2 from Oryza sativa subsp. japonica (Rice).